The following is a 91-amino-acid chain: Elongation factor 1-beta (91 aa).

It belongs to the EF-1-beta/EF-1-delta family.

In terms of biological role, promotes the exchange of GDP for GTP in EF-1-alpha/GDP, thus allowing the regeneration of EF-1-alpha/GTP that could then be used to form the ternary complex EF-1-alpha/GTP/AAtRNA. This Saccharolobus islandicus (strain Y.N.15.51 / Yellowstone #2) (Sulfolobus islandicus) protein is Elongation factor 1-beta.